The primary structure comprises 261 residues: Esterase citA (261 aa).

Catalysis depends on charge relay system residues S122, D207, and H235.

Belongs to the LovG family.

The protein operates within mycotoxin biosynthesis. Non-reducing polyketide synthase; part of the gene cluster that mediates the biosynthesis of the mycotoxin citrinin, a hepato-nephrotoxic compound to humans due to inhibition of respiration complex III. The pathway begins with the synthesis of a keto-aldehyde intermediate by the citrinin PKS (pksCT also named citS) from successive condensations of 4 malonyl-CoA units, presumably with a simple acetyl-CoA starter unit. Release of the keto-aldehyde intermediate is consistent with the presence of the C-terminal reductive release domain. CitA collaborates with citS by catalyzing the hydrolysis of ACP-bound acyl intermediates to free the ACP from stalled intermediates. CitB then catalyzes the oxidation of the C-12 methyl of the ketone intermediate to an alcohol intermediate which is further oxidized by the oxidoreductase citC to produce a bisaldehyde intermediate. The fourth catalytic step is catalyzed by the citD aldehyde dehydrogenase. The final transformation is the reduction of C-3 by citE to provide the chemically stable citrinin nucleus. CitE appears highly selective for its substrate as its presence in any context other than a full complement of citS and citA-D does not result in observable new compounds. The protein is Esterase citA of Monascus ruber (Mold).